We begin with the raw amino-acid sequence, 236 residues long: MTQTKEERVHQVFESIYKRYDMMNSVISFQRHKAWRKDTMKRMKVQPGDHALDVCCGTADWTIALGEAVGHNGKVEGLDFSKNMLLIGEEKVKEHKMKHVSLRHGNAMELPYADETFDVVTIGFGLRNVPDYMQVLKEMHRVVKKGGKVVCLETSQPTIPVFKNLYFFYFRRVMPVFGKVFAKSYDEYSWLQESTMSFPNREKLAEMFREAGFERVDVKPYSGGVACMHLGVKGKN.

S-adenosyl-L-methionine contacts are provided by residues Thr-58, Asp-79, and 106-107; that span reads NA.

Belongs to the class I-like SAM-binding methyltransferase superfamily. MenG/UbiE family.

The catalysed reaction is a 2-demethylmenaquinol + S-adenosyl-L-methionine = a menaquinol + S-adenosyl-L-homocysteine + H(+). It participates in quinol/quinone metabolism; menaquinone biosynthesis; menaquinol from 1,4-dihydroxy-2-naphthoate: step 2/2. Its function is as follows. Methyltransferase required for the conversion of demethylmenaquinol (DMKH2) to menaquinol (MKH2). The chain is Demethylmenaquinone methyltransferase from Alkalihalophilus pseudofirmus (strain ATCC BAA-2126 / JCM 17055 / OF4) (Bacillus pseudofirmus).